A 186-amino-acid polypeptide reads, in one-letter code: ATP-dependent protease subunit HslV (186 aa).

Residue Thr14 is part of the active site. 3 residues coordinate Na(+): Ala168, Cys171, and Thr174.

It belongs to the peptidase T1B family. HslV subfamily. As to quaternary structure, a double ring-shaped homohexamer of HslV is capped on each side by a ring-shaped HslU homohexamer. The assembly of the HslU/HslV complex is dependent on binding of ATP.

The protein resides in the cytoplasm. It catalyses the reaction ATP-dependent cleavage of peptide bonds with broad specificity.. Its activity is regulated as follows. Allosterically activated by HslU binding. In terms of biological role, protease subunit of a proteasome-like degradation complex believed to be a general protein degrading machinery. This is ATP-dependent protease subunit HslV from Methylorubrum extorquens (strain CM4 / NCIMB 13688) (Methylobacterium extorquens).